Reading from the N-terminus, the 329-residue chain is Ribosomal protein L11 methyltransferase (329 aa).

S-adenosyl-L-methionine contacts are provided by Thr177, Gly198, Asp220, and Asn264.

It belongs to the methyltransferase superfamily. PrmA family.

Its subcellular location is the cytoplasm. It carries out the reaction L-lysyl-[protein] + 3 S-adenosyl-L-methionine = N(6),N(6),N(6)-trimethyl-L-lysyl-[protein] + 3 S-adenosyl-L-homocysteine + 3 H(+). Its function is as follows. Methylates ribosomal protein L11. This Helicobacter pylori (strain HPAG1) protein is Ribosomal protein L11 methyltransferase.